The sequence spans 241 residues: Beta-nerve growth factor (241 aa).

Residues M1–A18 form the signal peptide. A propeptide spanning residues E19–R121 is cleaved from the precursor. N-linked (GlcNAc...) asparagine glycans are attached at residues N69, N114, and N166. Cystine bridges form between C136–C201, C179–C229, and C189–C231. The a 1-acyl-sn-glycero-3-phospho-(1D-myo-inositol) site is built by Y173 and K209. K209 lines the a 1-acyl-sn-glycero-3-phospho-L-serine pocket.

This sequence belongs to the NGF-beta family. In terms of assembly, homodimer. The homodimer interacts with a single NTRK1 chain. The homodimer interacts with a single NGFR chain. The NGF dimer interacts with a single SORCS2 chain (via extracellular domain). The NGF precursor (proNGF) binds to a receptor complex formed by SORT1 and NGFR, which leads to NGF endocytosis. Both mature NGF and the immature NGF precursor (proNGF) interact with SORCS2 and with the heterodimer formed by SORCS2 and NGFR (via extracellular domains). The NGF precursor (proNGF) has much higher affinity for SORCS2 than mature NGF. The NGF precursor (proNGF) has much higher affinity for SORT1 than mature NGF. Interacts with ADAM10 in a divalent cation-dependent manner. Interacts with SORCS3. In terms of tissue distribution, detected in the granule and pyramidal cell layer in the hippocampus.

The protein localises to the secreted. It localises to the endosome lumen. Its function is as follows. Nerve growth factor is important for the development and maintenance of the sympathetic and sensory nervous systems. Extracellular ligand for the NTRK1 and NGFR receptors, activates cellular signaling cascades to regulate neuronal proliferation, differentiation and survival. The immature NGF precursor (proNGF) functions as a ligand for the heterodimeric receptor formed by SORCS2 and NGFR, and activates cellular signaling cascades that lead to inactivation of RAC1 and/or RAC2, reorganization of the actin cytoskeleton and neuronal growth cone collapse. In contrast to mature NGF, the precursor form (proNGF) promotes neuronal apoptosis (in vitro). Inhibits metalloproteinase-dependent proteolysis of platelet glycoprotein VI. Binds lysophosphatidylinositol and lysophosphatidylserine between the two chains of the homodimer. The lipid-bound form promotes histamine relase from mast cells, contrary to the lipid-free form. This chain is Beta-nerve growth factor (Ngf), found in Rattus norvegicus (Rat).